Reading from the N-terminus, the 1049-residue chain is Exotoxin PaxA (1049 aa).

4 helical membrane-spanning segments follow: residues 246 to 266, 311 to 331, 375 to 395, and 397 to 417; these read GLGLDIISSLLSGVTASFTLA, GPAAALIASSISLAISPLSFL, ITTISTALSAIAAGTAAASAG, and LVGAPITLLVTGITGLISGIL. Hemolysin-type calcium-binding repeat units follow at residues 744–761, 762–779, 780–797, 798–815, 826–843, and 844–861; these read KGSKFRDIFHGADGDDLL, NGNDGDDILYGDKGNDEL, RGDNGNDQLYGGEGNDKL, FGGNGNNYLSGGDGDDEL, RGGKGNDKLYGGAGSDFL, and DGGEGDDYLAGGEGNDFY.

It belongs to the RTX prokaryotic toxin (TC 1.C.11) family.

It localises to the secreted. Its subcellular location is the host cell membrane. Its function is as follows. PaxA is associated with abortion cases in swine and septicemia in young piglets. Shows cohemolytic activity with the sphingomyelinase of S.aureus but is devoid of direct hemolytic activity. This Pasteurella aerogenes protein is Exotoxin PaxA (paxA).